Reading from the N-terminus, the 318-residue chain is B3 domain-containing protein At1g05930 (318 aa).

The segment at residues 201–293 (FNRLISNDFL…VLCFAMRQWR (93 aa)) is a DNA-binding region (TF-B3).

It is found in the nucleus. The chain is B3 domain-containing protein At1g05930 from Arabidopsis thaliana (Mouse-ear cress).